Reading from the N-terminus, the 1077-residue chain is Carbamoyl phosphate synthase large chain (1077 aa).

The segment at 2–403 (PKRTDIKSIL…SLQKALRGLE (402 aa)) is carboxyphosphate synthetic domain. ATP contacts are provided by arginine 129, arginine 169, glycine 175, glycine 176, glutamate 208, leucine 210, glutamate 215, glycine 241, isoleucine 242, histidine 243, glutamine 285, and glutamate 299. The region spanning 133–328 (DIAMKKIGLD…IAKIAAKLAV (196 aa)) is the ATP-grasp 1 domain. 3 residues coordinate Mg(2+): glutamine 285, glutamate 299, and asparagine 301. Positions 285, 299, and 301 each coordinate Mn(2+). Residues 404 to 553 (VGATGFDPKV…YSTYEEECES (150 aa)) form an oligomerization domain region. The carbamoyl phosphate synthetic domain stretch occupies residues 554-936 (NPTSDRPKVM…AFSKAMLGSQ (383 aa)). The ATP-grasp 2 domain occupies 679–870 (QQAVNRLGLK…LAKIAARVMV (192 aa)). Arginine 715, arginine 754, leucine 756, glutamate 761, glycine 786, valine 787, histidine 788, serine 789, glutamine 829, and glutamate 841 together coordinate ATP. 3 residues coordinate Mg(2+): glutamine 829, glutamate 841, and asparagine 843. Mn(2+) is bound by residues glutamine 829, glutamate 841, and asparagine 843. One can recognise an MGS-like domain in the interval 937 to 1077 (SGMKKSGRAL…MHAKIKNMKA (141 aa)). The segment at 937–1077 (SGMKKSGRAL…MHAKIKNMKA (141 aa)) is allosteric domain.

Belongs to the CarB family. In terms of assembly, composed of two chains; the small (or glutamine) chain promotes the hydrolysis of glutamine to ammonia, which is used by the large (or ammonia) chain to synthesize carbamoyl phosphate. Tetramer of heterodimers (alpha,beta)4. Mg(2+) is required as a cofactor. Requires Mn(2+) as cofactor.

It carries out the reaction hydrogencarbonate + L-glutamine + 2 ATP + H2O = carbamoyl phosphate + L-glutamate + 2 ADP + phosphate + 2 H(+). The enzyme catalyses hydrogencarbonate + NH4(+) + 2 ATP = carbamoyl phosphate + 2 ADP + phosphate + 2 H(+). Its pathway is amino-acid biosynthesis; L-arginine biosynthesis; carbamoyl phosphate from bicarbonate: step 1/1. The protein operates within pyrimidine metabolism; UMP biosynthesis via de novo pathway; (S)-dihydroorotate from bicarbonate: step 1/3. Large subunit of the glutamine-dependent carbamoyl phosphate synthetase (CPSase). CPSase catalyzes the formation of carbamoyl phosphate from the ammonia moiety of glutamine, carbonate, and phosphate donated by ATP, constituting the first step of 2 biosynthetic pathways, one leading to arginine and/or urea and the other to pyrimidine nucleotides. The large subunit (synthetase) binds the substrates ammonia (free or transferred from glutamine from the small subunit), hydrogencarbonate and ATP and carries out an ATP-coupled ligase reaction, activating hydrogencarbonate by forming carboxy phosphate which reacts with ammonia to form carbamoyl phosphate. The protein is Carbamoyl phosphate synthase large chain of Yersinia pestis.